The following is an 83-amino-acid chain: Arminin 3b (83 aa).

An N-terminal signal peptide occupies residues 1-18 (MKIVFAILFLTFIALTYA). A propeptide spanning residues 19 to 57 (RSFEDLKEEIKNEIEKEIFDDLEEESDELDNNVKKFNDA) is cleaved from the precursor. The residue at position 80 (serine 80) is a Serine amide.

The protein belongs to the arminin family. In terms of tissue distribution, expressed in entodermal epithelium along the body column.

It is found in the secreted. The protein localises to the target cell membrane. Antimicrobial peptide with a broad-spectrum antimicrobial activity. Keeps its antibacterial activity under a wide range of salt concentrations that mimic physiological conditions of human blood, which is surprising, since Hydra is an obligate freshwater animal with nearly no salt tolerance. Does not affect red blood cells. In Hydra vulgaris (Hydra), this protein is Arminin 3b.